The following is a 125-amino-acid chain: Cu-Zn superoxide dismutase-like protein OPG175 (125 aa).

A disulfide bridge connects residues Cys-52 and Cys-102.

Belongs to the Cu-Zn superoxide dismutase family.

It localises to the virion. The protein localises to the host cytoplasm. In terms of biological role, superoxide dismutase-like protein with no enzymatic activity. This chain is Cu-Zn superoxide dismutase-like protein OPG175 (OPG175), found in Monkeypox virus.